The following is a 239-amino-acid chain: Large ribosomal subunit protein uL1 (239 aa).

It belongs to the universal ribosomal protein uL1 family. As to quaternary structure, part of the 50S ribosomal subunit.

Binds directly to 23S rRNA. The L1 stalk is quite mobile in the ribosome, and is involved in E site tRNA release. Functionally, protein L1 is also a translational repressor protein, it controls the translation of the L11 operon by binding to its mRNA. The chain is Large ribosomal subunit protein uL1 from Acidothermus cellulolyticus (strain ATCC 43068 / DSM 8971 / 11B).